The sequence spans 311 residues: Probable branched-chain-amino-acid aminotransferase (311 aa).

Position 160 is an N6-(pyridoxal phosphate)lysine (Lys-160).

It belongs to the class-IV pyridoxal-phosphate-dependent aminotransferase family. Pyridoxal 5'-phosphate is required as a cofactor.

It carries out the reaction L-leucine + 2-oxoglutarate = 4-methyl-2-oxopentanoate + L-glutamate. It catalyses the reaction L-isoleucine + 2-oxoglutarate = (S)-3-methyl-2-oxopentanoate + L-glutamate. The enzyme catalyses L-valine + 2-oxoglutarate = 3-methyl-2-oxobutanoate + L-glutamate. The protein operates within amino-acid biosynthesis; L-isoleucine biosynthesis; L-isoleucine from 2-oxobutanoate: step 4/4. It functions in the pathway amino-acid biosynthesis; L-leucine biosynthesis; L-leucine from 3-methyl-2-oxobutanoate: step 4/4. Its pathway is amino-acid biosynthesis; L-valine biosynthesis; L-valine from pyruvate: step 4/4. Its function is as follows. Acts on leucine, isoleucine and valine. The sequence is that of Probable branched-chain-amino-acid aminotransferase (ilvE) from Aquifex aeolicus (strain VF5).